The following is a 335-amino-acid chain: Putative hydrogenase expression/formation protein MJ0676 (335 aa).

Belongs to the HypE family.

The sequence is that of Putative hydrogenase expression/formation protein MJ0676 from Methanocaldococcus jannaschii (strain ATCC 43067 / DSM 2661 / JAL-1 / JCM 10045 / NBRC 100440) (Methanococcus jannaschii).